A 972-amino-acid polypeptide reads, in one-letter code: N-alpha-acetyltransferase 25, NatB auxiliary subunit (972 aa).

TPR repeat units lie at residues 11 to 44 (NDRR…HKDL), 45 to 78 (HCAK…EPTD), 79 to 112 (DNSL…VPNS), and 114 to 146 (EYHS…VPKN).

The protein belongs to the MDM20/NAA25 family. As to quaternary structure, component of the N-terminal acetyltransferase B (NatB) complex which is composed of NAA20 and NAA25.

It localises to the cytoplasm. Non-catalytic subunit of the NatB complex which catalyzes acetylation of the N-terminal methionine residues of peptides beginning with Met-Asp, Met-Glu, Met-Asn and Met-Gln. May play a role in normal cell-cycle progression. This chain is N-alpha-acetyltransferase 25, NatB auxiliary subunit (NAA25), found in Homo sapiens (Human).